The primary structure comprises 62 residues: UPF0434 protein RHECIAT_CH0004260 (62 aa).

Belongs to the UPF0434 family.

The sequence is that of UPF0434 protein RHECIAT_CH0004260 from Rhizobium etli (strain CIAT 652).